Here is a 273-residue protein sequence, read N- to C-terminus: DnaJ homolog subfamily C member 27 (273 aa).

Residues 1-18 (MESNVPKRKEPLKSLRIK) are required for interaction with MAPK1. GTP contacts are provided by residues 23-30 (GNAEVGKS), 71-75 (DMAGH), and 134-137 (NKID). In terms of domain architecture, J spans 217–273 (DSWEMLGVRPGASREEVNKAYRKLAVLLHPDKCVAPGSEDAFKAVVNARTALLKNIK).

It belongs to the small GTPase superfamily. Rab family. In terms of assembly, interacts directly with MAPK1 (wild-type and kinase-deficient forms). Interacts directly (in GTP-bound form) with MAP2K1 (wild-type and kinase-deficient forms).

Its subcellular location is the nucleus. GTPase which can activate the MEK/ERK pathway and induce cell transformation when overexpressed. May act as a nuclear scaffold for MAPK1, probably by association with MAPK1 nuclear export signal leading to enhanced ERK1/ERK2 signaling. The sequence is that of DnaJ homolog subfamily C member 27 (Dnajc27) from Rattus norvegicus (Rat).